The chain runs to 112 residues: Large ribosomal subunit protein uL22 (112 aa).

Belongs to the universal ribosomal protein uL22 family. As to quaternary structure, part of the 50S ribosomal subunit.

This protein binds specifically to 23S rRNA; its binding is stimulated by other ribosomal proteins, e.g. L4, L17, and L20. It is important during the early stages of 50S assembly. It makes multiple contacts with different domains of the 23S rRNA in the assembled 50S subunit and ribosome. In terms of biological role, the globular domain of the protein is located near the polypeptide exit tunnel on the outside of the subunit, while an extended beta-hairpin is found that lines the wall of the exit tunnel in the center of the 70S ribosome. The chain is Large ribosomal subunit protein uL22 from Legionella pneumophila subsp. pneumophila (strain Philadelphia 1 / ATCC 33152 / DSM 7513).